We begin with the raw amino-acid sequence, 329 residues long: Homeobox protein Nkx-3.2 (329 aa).

The disordered stretch occupies residues 107–188 (GLGSPCGGAP…PDPSPPDEDP (82 aa)). Gly residues predominate over residues 110–124 (SPCGGAPGAGAGGEP). Residues 138-160 (ELGRPGDIGERKKQRPLEARAKG) show a composition bias toward basic and acidic residues. A DNA-binding region (homeobox) is located at residues 202–261 (KKRSRAAFSHAQVFELERRFNHQRYLSGPERADLAASLKLTETQVKIWFQNRRYKTKRRQ).

It belongs to the NK-3 homeobox family. In terms of tissue distribution, first expressed in developing facial cartilage in early tailbud embryos, with expression localized to the basihyobranchial, palatoquadrate and possibly Meckel's cartilages. Shortly after, a second area of expression is seen in the musculature of the anterior gut. During late embryogenesis, gut expression extends into hindgut tissues. In adults, expressed at a high level in the kidney, pancreas, spleen and stomach and at a slightly lower level in the intestine, skeletal muscle and tongue. Adult heart, liver and lung show little or no expression.

Its subcellular location is the nucleus. This Xenopus laevis (African clawed frog) protein is Homeobox protein Nkx-3.2 (nkx3-2).